We begin with the raw amino-acid sequence, 25 residues long: Cysteine protease inhibitor 2 (25 aa).

Belongs to the protease inhibitor I3 (leguminous Kunitz-type inhibitor) family. Cortex of tuber.

Functionally, inhibitor of subtilisin. Inhibits moderately trypsin and chymotrypsin (serine proteases). May protect the plant by inhibiting proteases of invading organisms. This chain is Cysteine protease inhibitor 2, found in Solanum tuberosum (Potato).